The primary structure comprises 594 residues: Cytosolic Fe-S cluster assembly factor NAR1 (594 aa).

Residues Cys20, Cys88, Cys91, Cys94, Cys209, and Cys264 each contribute to the [4Fe-4S] cluster site. The tract at residues 444–465 (RRARMSKSEDSSGASASSMAPA) is disordered. The span at 454-465 (SSGASASSMAPA) shows a compositional bias: low complexity. [4Fe-4S] cluster is bound by residues Cys481 and Cys485. Residues 492-511 (IAAPAPTSTPPAAPAPAHAA) are disordered.

Belongs to the NARF family.

In terms of biological role, component of the cytosolic Fe/S protein assembly machinery. Required for maturation of extramitochondrial Fe/S proteins. May play a role in the transfer of pre-assembled Fe/S clusters to target apoproteins. The chain is Cytosolic Fe-S cluster assembly factor NAR1 (NAR1) from Lodderomyces elongisporus (strain ATCC 11503 / CBS 2605 / JCM 1781 / NBRC 1676 / NRRL YB-4239) (Yeast).